We begin with the raw amino-acid sequence, 86 residues long: MKVSVLITLAVLGVMFVWTSAAELEERGSDQRDSPAWLKSMERIFQSEERECRKMFGGCSVDSDCCAHLGCKPTLKYCAWDGTFGK.

A signal peptide spans 1-21; the sequence is MKVSVLITLAVLGVMFVWTSA. A propeptide spanning residues 22-50 is cleaved from the precursor; it reads AELEERGSDQRDSPAWLKSMERIFQSEER. 3 disulfide bridges follow: Cys52/Cys66, Cys59/Cys71, and Cys65/Cys78. Phe84 bears the Phenylalanine amide mark.

The protein belongs to the neurotoxin 10 (Hwtx-1) family. 28 (Jztx-11) subfamily. As to expression, expressed by the venom gland.

Its subcellular location is the secreted. This toxin acts as a voltage-dependent gating-modifier. It inhibits the sodium conductance (IC(50)=124 nM) and slows the fast inactivation (EC(50)=1180 nM) of Nav1.5/SCN5A. It significantly shifts the activation to more depolarized voltages and decreases the deactivation of Nav1.5 currents upon extreme depolarization, but only slightly affects voltage-dependence of steady-state inactivation. In addition, this toxin causes an approximately five-fold decrease in the rate of recovery from inactivation and an approximately 1.9-fold reduction in the closed-state inactivation rate. This toxin integrates the functions of site 3 toxins (alpha-scorpion toxins) with site 4 toxins (beta-scorpion and spider toxins) by targeting multiple sites on Nav1.5. Also shows inhibition of voltage-gated potassium channels (5 uM completely inhibits Kv2.1/KCNB1, whereas 5 uM moderately inhibits Kv4.2/KCND2 Kv4.1/KCND1 channels). This Chilobrachys guangxiensis (Chinese earth tiger tarantula) protein is Kappa-theraphotoxin-Cg1a 5.